The chain runs to 935 residues: Progesterone receptor (935 aa).

The AF3; mediates transcriptional activation stretch occupies residues 1–164 (MTELKAKGPR…PATQRVLSPL (164 aa)). Residues 1–256 (MTELKAKGPR…AAAGGGAAAV (256 aa)) form a disordered region. Residues 1–568 (MTELKAKGPR…YSFESLPQKI (568 aa)) are modulating, Pro-Rich. Residue serine 20 is modified to Phosphoserine. Residues 55-59 (LDGLL) carry the LXXL motif 1 motif. Serine 81 carries the phosphoserine modification. The short motif at 115–119 (LDTLL) is the LXXL motif 2 element. Serine 130 and serine 162 each carry phosphoserine. Residues 165–305 (MSRSGGKAGD…LATTTMDFTH (141 aa)) are mediates transcriptional transrepression. A Nuclear localization signal motif is present at residues 183 to 187 (KVLPR). 2 positions are modified to phosphoserine: serine 190 and serine 213. The span at 220–231 (EVEEEDGSESED) shows a compositional bias: acidic residues. Residues 232–246 (SAGPLLKGKPRALGG) show a composition bias toward low complexity. Phosphoserine; by MAPK1 is present on serine 294. The segment at 328–353 (SYDGGAGAASAFAPPRSSPSASSTPV) is disordered. Over residues 335–350 (AASAFAPPRSSPSASS) the composition is skewed to low complexity. Position 345 is a phosphoserine; by MAPK (serine 345). Residue lysine 388 forms a Glycyl lysine isopeptide (Lys-Gly) (interchain with G-Cter in SUMO); alternate linkage. Lysine 388 participates in a covalent cross-link: Glycyl lysine isopeptide (Lys-Gly) (interchain with G-Cter in ubiquitin); alternate. Serine 400 carries the phosphoserine; by CDK2 modification. A disordered region spans residues 415–452 (PDFPLGPPPPLPPRAPPSRPGEAAVTAAPAGASVSSAS). Pro residues predominate over residues 418–433 (PLGPPPPLPPRAPPSR). Residues 434–452 (PGEAAVTAAPAGASVSSAS) are compositionally biased toward low complexity. The segment at 456-548 (STLECILYKA…VYPPYLNYLR (93 aa)) is AF1; mediates transcriptional activation. Lysine 533 participates in a covalent cross-link: Glycyl lysine isopeptide (Lys-Gly) (interchain with G-Cter in SUMO). 2 consecutive NR C4-type zinc fingers follow at residues 569 to 589 (CLIC…CGSC) and 605 to 629 (CAGR…LRKC). Residues 569 to 641 (CLICGDEASG…AGMVLGGRKF (73 aa)) constitute a DNA-binding region (nuclear receptor). Serine 678 carries the phosphoserine modification. The NR LBD domain maps to 681 to 915 (QDIQLIPPLI…EFPEMMSEVI (235 aa)). The AF2; mediates transcriptional activation stretch occupies residues 689 to 935 (LINLLVSIEP…MVKPLLFHKK (247 aa)). Position 768 (arginine 768) interacts with progesterone.

The protein belongs to the nuclear hormone receptor family. In terms of assembly, interacts with SMARD1 and UNC45A. Interacts with CUEDC2; the interaction promotes ubiquitination, decreases sumoylation, and represses transcriptional activity. Interacts with PIAS3; the interaction promotes sumoylation of PR in a hormone-dependent manner, inhibits DNA-binding, and alters nuclear export. Interacts with SP1; the interaction requires ligand-induced phosphorylation on Ser-345 by ERK1/2-MAPK. Interacts with PRMT2. Interacts with NCOA2 and NCOA1. Interacts with KLF9. Interacts with GTF2B. In terms of processing, phosphorylated on multiple serine sites. Several of these sites are hormone-dependent. Phosphorylation on Ser-294 is highly hormone-dependent and modulates ubiquitination and sumoylation on Lys-388. Phosphorylation on Ser-345 also requires induction by hormone. Basal phosphorylation on Ser-81, Ser-162, Ser-190 and Ser-400 is increased in response to progesterone and can be phosphorylated in vitro by the CDK2-A1 complex. Increased levels of phosphorylation on Ser-400 also in the presence of EGF, heregulin, IGF, PMA and FBS. Phosphorylation at this site by CDK2 is ligand-independent, and increases nuclear translocation and transcriptional activity. Phosphorylation at Ser-162 and Ser-294, but not at Ser-190, is impaired during the G(2)/M phase of the cell cycle. Phosphorylation on Ser-345 by ERK1/2 MAPK is required for interaction with SP1. Post-translationally, sumoylation is hormone-dependent and represses transcriptional activity. Sumoylation on all three sites is enhanced by PIAS3. Desumoylated by SENP1. Sumoylation on Lys-388, the main site of sumoylation, is repressed by ubiquitination on the same site, and modulated by phosphorylation at Ser-294. Ubiquitination is hormone-dependent and represses sumoylation on the same site. Promoted by MAPK-mediated phosphorylation on Ser-294. Ubiquitinated by UBR5, leading to its degradation: UBR5 specifically recognizes and binds ligand-bound PGR when it is not associated with coactivators (NCOAs). In presence of NCOAs, the UBR5-degron is not accessible, preventing its ubiquitination and degradation. In terms of processing, palmitoylated by ZDHHC7 and ZDHHC21. Palmitoylation is required for plasma membrane targeting and for rapid intracellular signaling via ERK and AKT kinases and cAMP generation.

It is found in the nucleus. The protein resides in the cytoplasm. Its function is as follows. The steroid hormones and their receptors are involved in the regulation of eukaryotic gene expression and affect cellular proliferation and differentiation in target tissues. Transcriptional activator of several progesteron-dependent promoters in a variety of cell types. Involved in activation of SRC-dependent MAPK signaling on hormone stimulation. The chain is Progesterone receptor (PGR) from Macaca sylvanus (Barbary macaque).